The chain runs to 242 residues: Ferritin, mitochondrial (242 aa).

The transit peptide at 1–49 (MLPCSLFLPKHISTSLVFLRSARHGFALLPRWVPRLSSDYPPAAPIRLL) directs the protein to the mitochondrion. Residues 70–219 (QNFHPDSEAA…DHVNNLVKMG (150 aa)) enclose the Ferritin-like diiron domain. Fe cation is bound by residues E87, E122, H125, E167, and Q201.

It belongs to the ferritin family. As to quaternary structure, homooligomer of 24 subunits. The functional molecule is roughly spherical and contains a central cavity into which the polymeric mineral iron core is deposited.

Its subcellular location is the mitochondrion. The enzyme catalyses 4 Fe(2+) + O2 + 4 H(+) = 4 Fe(3+) + 2 H2O. Functionally, catalyzes the oxidation of ferrous iron(II) to ferric iron(III) and stores iron in a soluble, non-toxic, readily available form. Important for iron homeostasis. Iron is taken up in the ferrous form and deposited as ferric hydroxides after oxidation. This is Ferritin, mitochondrial from Bos taurus (Bovine).